Reading from the N-terminus, the 215-residue chain is Beta-crystallin A3-2 (215 aa).

The segment at 1–30 (MEIPAIQTEREDITSEKMAQINPLPVPLGP) is N-terminal arm. Beta/gamma crystallin 'Greek key' domains are found at residues 31–70 (WKIT…KVEC) and 71–117 (GAWI…RPIC). The connecting peptide stretch occupies residues 118 to 123 (SANHEE). 2 consecutive Beta/gamma crystallin 'Greek key' domains span residues 124-165 (SKLV…KVQC) and 166-214 (GAWV…RRIQ).

This sequence belongs to the beta/gamma-crystallin family. Homo/heterodimer, or complexes of higher-order. The structure of beta-crystallin oligomers seems to be stabilized through interactions between the N-terminal arms. In terms of processing, the N-terminus is blocked.

Its function is as follows. Crystallins are the dominant structural components of the vertebrate eye lens. The chain is Beta-crystallin A3-2 from Aquarana catesbeiana (American bullfrog).